The primary structure comprises 271 residues: 5-deoxy-glucuronate isomerase (271 aa).

This sequence belongs to the isomerase IolB family.

It carries out the reaction 5-deoxy-D-glucuronate = 5-dehydro-2-deoxy-D-gluconate. Its pathway is polyol metabolism; myo-inositol degradation into acetyl-CoA; acetyl-CoA from myo-inositol: step 4/7. Its function is as follows. Involved in the isomerization of 5-deoxy-glucuronate (5DG) to 5-dehydro-2-deoxy-D-gluconate (DKG or 2-deoxy-5-keto-D-gluconate). In Shouchella clausii (strain KSM-K16) (Alkalihalobacillus clausii), this protein is 5-deoxy-glucuronate isomerase.